A 337-amino-acid chain; its full sequence is Pseudouridine-5'-phosphate glycosidase (337 aa).

Residue Glu-26 is the Proton donor of the active site. Positions 87 and 107 each coordinate substrate. Asp-139 contacts Mn(2+). 141–143 is a binding site for substrate; sequence SAD. The active-site Nucleophile is Lys-160. Low complexity predominate over residues 306-325; that stretch reads SSGPQAGAGAPGAEPGPARR. Residues 306–337 are disordered; that stretch reads SSGPQAGAGAPGAEPGPARRTSPARAPSGEGW.

It belongs to the pseudouridine-5'-phosphate glycosidase family. Homotrimer. Mn(2+) serves as cofactor.

The catalysed reaction is D-ribose 5-phosphate + uracil = psi-UMP + H2O. Functionally, catalyzes the reversible cleavage of pseudouridine 5'-phosphate (PsiMP) to ribose 5-phosphate and uracil. Functions biologically in the cleavage direction, as part of a pseudouridine degradation pathway. This chain is Pseudouridine-5'-phosphate glycosidase, found in Methylobacterium nodulans (strain LMG 21967 / CNCM I-2342 / ORS 2060).